The sequence spans 122 residues: MTSTVEFINRWQRIALLSQSLLELAQRGEWDLLLQQEVSYLQRIETVMEKQTPPGITRSIQDMVAGYIKQTLDNEQLLKGLLQQRLDELSSLIGQSTRQKSLNNAYGRLSGMLLVPDASGAS.

Positions 1 to 50 (MTSTVEFINRWQRIALLSQSLLELAQRGEWDLLLQQEVSYLQRIETVMEK) are required for homodimerization. Residues 60–98 (IQDMVAGYIKQTLDNEQLLKGLLQQRLDELSSLIGQSTR) form a fliD binding region.

This sequence belongs to the FliT family. As to quaternary structure, homodimer. Interacts with FliD and FlhC.

Its subcellular location is the cytoplasm. It localises to the cytosol. In terms of biological role, dual-function protein that regulates the transcription of class 2 flagellar operons and that also acts as an export chaperone for the filament-capping protein FliD. As a transcriptional regulator, acts as an anti-FlhDC factor; it directly binds FlhC, thus inhibiting the binding of the FlhC/FlhD complex to class 2 promoters, resulting in decreased expression of class 2 flagellar operons. As a chaperone, effects FliD transition to the membrane by preventing its premature polymerization, and by directing it to the export apparatus. This chain is Flagellar protein FliT, found in Salmonella paratyphi A (strain AKU_12601).